Reading from the N-terminus, the 310-residue chain is Olfactory receptor 2A7 (310 aa).

Residues 1–24 (MGDNITSITEFLLLGFPVGPRIQM) lie on the Extracellular side of the membrane. A glycan (N-linked (GlcNAc...) asparagine) is linked at asparagine 4. A helical transmembrane segment spans residues 25–48 (LLFGLFSLFYVFTLLGNGTILGLI). Residues 49–56 (SLDSRLHA) lie on the Cytoplasmic side of the membrane. A helical membrane pass occupies residues 57–78 (PMYFFLSHLAVVDIAYACNTVP). Residues 79 to 99 (RMLVNLLHPAKPISFAGRMMQ) are Extracellular-facing. A helical membrane pass occupies residues 100-119 (TFLFSTFAVTECLLLVVMSY). Over 120–138 (DLYVAICHPLRYLAIMTWR) the chain is Cytoplasmic. Residues 139–157 (VCITLAVTSWTTGVLLSLI) traverse the membrane as a helical segment. Over 158-194 (HLVLLLPLPFCRPQKIYHFFCEILAVLKLACADTHIN) the chain is Extracellular. A helical membrane pass occupies residues 195 to 218 (ENMVLAGAISGLVGPLSTIVVSYM). Over 219–235 (CILCAILQIQSREVQRK) the chain is Cytoplasmic. Residues 236–258 (AFCTCFSHLCVIGLFYGTAIIMY) form a helical membrane-spanning segment. Residues 259–271 (VGPRYGNPKEQKK) are Extracellular-facing. A helical membrane pass occupies residues 272 to 291 (YLLLFHSLFNPMLNPLICSL). At 292–310 (RNSEVKNTLKRVLGVERAL) the chain is on the cytoplasmic side.

It belongs to the G-protein coupled receptor 1 family.

It localises to the cell membrane. Functionally, odorant receptor. The polypeptide is Olfactory receptor 2A7 (OR2A7) (Homo sapiens (Human)).